The primary structure comprises 333 residues: Fructose-1,6-bisphosphatase class 1 1 (333 aa).

4 residues coordinate Mg(2+): Glu81, Asp100, Leu102, and Asp103. Residues 103 to 106 and Asn191 contribute to the substrate site; that span reads DGSS. Glu263 provides a ligand contact to Mg(2+).

This sequence belongs to the FBPase class 1 family. Homotetramer. Mg(2+) serves as cofactor.

The protein localises to the cytoplasm. The enzyme catalyses beta-D-fructose 1,6-bisphosphate + H2O = beta-D-fructose 6-phosphate + phosphate. Its pathway is carbohydrate biosynthesis; gluconeogenesis. Fructose-1,6-bisphosphatase II is not light-activated. This is Fructose-1,6-bisphosphatase class 1 1 from Cereibacter sphaeroides (Rhodobacter sphaeroides).